Reading from the N-terminus, the 175-residue chain is Protein SYM1 (175 aa).

The next 3 helical transmembrane spans lie at 55–75 (MALY…AFLA), 92–112 (VACD…SSMA), and 143–163 (VINF…IIAI).

The protein belongs to the peroxisomal membrane protein PXMP2/4 family.

The protein resides in the mitochondrion inner membrane. Its function is as follows. May be involved in cellular response to stress. Required to maintain mitochondrial DNA (mtDNA) integrity and stability. The sequence is that of Protein SYM1 (SYM1) from Gibberella zeae (strain ATCC MYA-4620 / CBS 123657 / FGSC 9075 / NRRL 31084 / PH-1) (Wheat head blight fungus).